The chain runs to 473 residues: Probable DNA N(6)-methyladenine demethylase ALKBH1B (473 aa).

Asn-357–Tyr-359 contacts 2-oxoglutarate. Positions 368, 391, and 449 each coordinate Fe cation. Residue Arg-461 to Arg-465 participates in 2-oxoglutarate binding.

This sequence belongs to the alkB family. The cofactor is Fe(2+). In terms of tissue distribution, undetectable.

The enzyme catalyses an N(6)-methyl-2'-deoxyadenosine in DNA + 2-oxoglutarate + O2 = a 2'-deoxyadenosine in DNA + formaldehyde + succinate + CO2. Its function is as follows. Dioxygenase that may catalyzes DNA N(6)-methyladenine (6 mA) demethylation. Requires molecular oxygen, alpha-ketoglutarate and iron. The protein is Probable DNA N(6)-methyladenine demethylase ALKBH1B of Arabidopsis thaliana (Mouse-ear cress).